Consider the following 504-residue polypeptide: L-carnitine/gamma-butyrobetaine antiporter (504 aa).

12 helical membrane passes run 10–30 (IEPKVFFPPLIIVGILCWLTV), 51–71 (WGWAFEWYMVVMLFGWFWLVF), 92–112 (IFMMFASCTSAAVLFWGSIEI), 143–163 (GPLPWATYSFLSVAFAYFFFV), 195–215 (FYLVALIFAMGTSLGLATPLV), 231–251 (LDAIIITCWIILHAICVACGL), 263–283 (SYLSFLMLGWVFIVSGASFIM), 316–336 (WTVFYWAWWVIYAIQMSIFLA), 347–367 (LCFGMVMGLTASTWILWTVLG), 398–418 (WAALPLSTATMWGFFILCFIA), 446–466 (LLVRIGWSILVGIIGIVLLAL), and 475–495 (AIIAGGCPLFFVNIMVTLSFI).

The protein belongs to the BCCT transporter (TC 2.A.15) family. CaiT subfamily. In terms of assembly, homotrimer.

The protein localises to the cell inner membrane. It carries out the reaction 4-(trimethylamino)butanoate(in) + (R)-carnitine(out) = 4-(trimethylamino)butanoate(out) + (R)-carnitine(in). It participates in amine and polyamine metabolism; carnitine metabolism. Catalyzes the exchange of L-carnitine for gamma-butyrobetaine. This Shigella flexneri serotype 5b (strain 8401) protein is L-carnitine/gamma-butyrobetaine antiporter.